Reading from the N-terminus, the 604-residue chain is Linalool synthase Tps-5073L4, chloroplastic (604 aa).

Residues 1-36 (MSSMRIYVAIMKKPSVKHVDYVDKKASKPSWRVSSS) constitute a chloroplast transit peptide. Residues arginine 323, aspartate 360, aspartate 364, arginine 501, and aspartate 504 each coordinate (2E)-geranyl diphosphate. Mg(2+) is bound by residues aspartate 360 and aspartate 364. A DDXXD motif motif is present at residues 360–364 (DDVYD). Aspartate 504, threonine 508, and glutamate 512 together coordinate Mg(2+).

The protein belongs to the terpene synthase family. Tpsb subfamily. Monomer. Mg(2+) serves as cofactor. Mn(2+) is required as a cofactor.

It is found in the plastid. It localises to the chloroplast. It catalyses the reaction (2E)-geranyl diphosphate + H2O = linalool + diphosphate. It functions in the pathway secondary metabolite biosynthesis; terpenoid biosynthesis. Monoterpene synthase (mono-TPS) involved in the biosynthesis of monoterpenes natural products. Catalyzes the conversion of (2E)-geranyl diphosphate (GPP) into linalool. The protein is Linalool synthase Tps-5073L4, chloroplastic of Perilla frutescens (Beefsteak mint).